Reading from the N-terminus, the 475-residue chain is Membrane-bound lytic murein transglycosylase F (475 aa).

The N-terminal stretch at Met-1–Ala-15 is a signal peptide. Residues Ala-16–Val-258 form a non-LT domain region. The LT domain stretch occupies residues Lys-259–Pro-475. The active site involves Glu-303.

In the N-terminal section; belongs to the bacterial solute-binding protein 3 family. The protein in the C-terminal section; belongs to the transglycosylase Slt family.

The protein resides in the cell outer membrane. It catalyses the reaction Exolytic cleavage of the (1-&gt;4)-beta-glycosidic linkage between N-acetylmuramic acid (MurNAc) and N-acetylglucosamine (GlcNAc) residues in peptidoglycan, from either the reducing or the non-reducing ends of the peptidoglycan chains, with concomitant formation of a 1,6-anhydrobond in the MurNAc residue.. In terms of biological role, murein-degrading enzyme that degrades murein glycan strands and insoluble, high-molecular weight murein sacculi, with the concomitant formation of a 1,6-anhydromuramoyl product. Lytic transglycosylases (LTs) play an integral role in the metabolism of the peptidoglycan (PG) sacculus. Their lytic action creates space within the PG sacculus to allow for its expansion as well as for the insertion of various structures such as secretion systems and flagella. This chain is Membrane-bound lytic murein transglycosylase F, found in Shewanella halifaxensis (strain HAW-EB4).